The chain runs to 494 residues: Tripartite motif-containing protein 5 (494 aa).

A2 is modified (N-acetylalanine). The segment at 15–59 (CPICLELLTEPLSLDCGHSFCQACITANHKESMLHQGERSCPLCR) adopts an RING-type zinc-finger fold. A B box-type zinc finger spans residues 91–132 (QNVDHCARHGEKLLLFCEQDGNIICWLCERSQEHRGHNTFLV). C96, H99, C118, and H124 together coordinate Zn(2+). Positions 132 to 223 (VEEVAQKYRE…RLVQSENDMV (92 aa)) form a coiled coil. Residues 186–199 (FKQLRDILDCEESN) are required for interaction with GABARAP and for autophagy. Positions 280–494 (PDLKRMLQVL…LPMTLCSPSS (215 aa)) constitute a B30.2/SPRY domain.

The protein belongs to the TRIM/RBCC family. As to quaternary structure, can form homodimers and homotrimers. In addition to lower-order dimerization, also exhibits a higher-order multimerization and both low- and high-order multimerizations are essential for its restriction activity. Interacts with BTBD1 and BTBD2. Interacts with PSMC4, PSMC5, PSMD7 and HSPA8/HSC70. Interacts (via B30.2/SPRY domain) with HSPA1A/B. Interacts with PSMC2, MAP3K7/TAK1, TAB2 and TAB3. Interacts with SQSTM1. Interacts with TRIM6 and TRIM34. Interacts with ULK1 (phosphorylated form), GABARAP, GABARAPL1, GABARAPL2, MAP1LC3A, MAP1LC3C and BECN1. In terms of processing, degraded in a proteasome-independent fashion in the absence of viral infection but in a proteasome-dependent fashion following exposure to restriction sensitive virus. Post-translationally, autoubiquitinated in a RING finger- and UBE2D2-dependent manner. Monoubiquitinated by TRIM21. Deubiquitinated by Yersinia YopJ. Ubiquitination may not lead to proteasomal degradation.

Its subcellular location is the cytoplasm. The protein localises to the nucleus. It catalyses the reaction S-ubiquitinyl-[E2 ubiquitin-conjugating enzyme]-L-cysteine + [acceptor protein]-L-lysine = [E2 ubiquitin-conjugating enzyme]-L-cysteine + N(6)-ubiquitinyl-[acceptor protein]-L-lysine.. Its pathway is protein modification; protein ubiquitination. Capsid-specific restriction factor that prevents infection from non-host-adapted retroviruses. Blocks viral replication early in the life cycle, after viral entry but before reverse transcription. In addition to acting as a capsid-specific restriction factor, also acts as a pattern recognition receptor that activates innate immune signaling in response to the retroviral capsid lattice. Binding to the viral capsid triggers its E3 ubiquitin ligase activity, and in concert with the heterodimeric ubiquitin conjugating enzyme complex UBE2V1-UBE2N (also known as UBC13-UEV1A complex) generates 'Lys-63'-linked polyubiquitin chains, which in turn are catalysts in the autophosphorylation of the MAP3K7/TAK1 complex (includes TAK1, TAB2, and TAB3). Activation of the MAP3K7/TAK1 complex by autophosphorylation results in the induction and expression of NF-kappa-B and MAPK-responsive inflammatory genes, thereby leading to an innate immune response in the infected cell. Plays a role in regulating autophagy through activation of autophagy regulator BECN1 by causing its dissociation from its inhibitors BCL2 and TAB2. The polypeptide is Tripartite motif-containing protein 5 (TRIM5) (Saimiri boliviensis boliviensis (Bolivian squirrel monkey)).